The sequence spans 311 residues: Protoheme IX farnesyltransferase (311 aa).

The next 8 membrane-spanning stretches (helical) occupy residues 39–59 (LLAMAAGLSLALYVTGIPIGE), 61–81 (LPEILFAIFGSAFVIGAAGAF), 111–131 (ALVLGISLSLLGLLLLGVASP), 133–153 (AALFGFLGLFLYVVPYTMWSK), 162–182 (IGSVGGAVPPLIGWAAISGDL), 187–207 (IIGLFVVTVLWQMPHFYAIAI), 246–266 (FFFVSLSWFITIVALVLSLIW), and 287–307 (FVFSLNYLTILFTVIIGFSLL).

It belongs to the UbiA prenyltransferase family. Protoheme IX farnesyltransferase subfamily. Interacts with CtaA.

It localises to the cell membrane. It catalyses the reaction heme b + (2E,6E)-farnesyl diphosphate + H2O = Fe(II)-heme o + diphosphate. It participates in porphyrin-containing compound metabolism; heme O biosynthesis; heme O from protoheme: step 1/1. In terms of biological role, converts heme B (protoheme IX) to heme O by substitution of the vinyl group on carbon 2 of heme B porphyrin ring with a hydroxyethyl farnesyl side group. The protein is Protoheme IX farnesyltransferase of Shouchella clausii (strain KSM-K16) (Alkalihalobacillus clausii).